The chain runs to 386 residues: Succinate--CoA ligase [ADP-forming] subunit beta (386 aa).

An ATP-grasp domain is found at K9–E244. ATP-binding positions include K46, G53 to G55, E99, A102, and E107. Positions 199 and 213 each coordinate Mg(2+). Residues N264 and G321–M323 each bind substrate.

It belongs to the succinate/malate CoA ligase beta subunit family. Heterotetramer of two alpha and two beta subunits. The cofactor is Mg(2+).

It carries out the reaction succinate + ATP + CoA = succinyl-CoA + ADP + phosphate. The enzyme catalyses GTP + succinate + CoA = succinyl-CoA + GDP + phosphate. It functions in the pathway carbohydrate metabolism; tricarboxylic acid cycle; succinate from succinyl-CoA (ligase route): step 1/1. Its function is as follows. Succinyl-CoA synthetase functions in the citric acid cycle (TCA), coupling the hydrolysis of succinyl-CoA to the synthesis of either ATP or GTP and thus represents the only step of substrate-level phosphorylation in the TCA. The beta subunit provides nucleotide specificity of the enzyme and binds the substrate succinate, while the binding sites for coenzyme A and phosphate are found in the alpha subunit. This is Succinate--CoA ligase [ADP-forming] subunit beta from Polaromonas sp. (strain JS666 / ATCC BAA-500).